The following is a 216-amino-acid chain: Histidine biosynthesis bifunctional protein HisIE (216 aa).

Residues 1–127 (MSFIDSLSPQ…GKIVAPPGDT (127 aa)) form a phosphoribosyl-AMP cyclohydrolase region. Positions 128–216 (LSQVFQVICD…VYRKLQERRR (89 aa)) are phosphoribosyl-ATP pyrophosphohydrolase.

In the N-terminal section; belongs to the PRA-CH family. It in the C-terminal section; belongs to the PRA-PH family.

It is found in the cytoplasm. The catalysed reaction is 1-(5-phospho-beta-D-ribosyl)-ATP + H2O = 1-(5-phospho-beta-D-ribosyl)-5'-AMP + diphosphate + H(+). The enzyme catalyses 1-(5-phospho-beta-D-ribosyl)-5'-AMP + H2O = 1-(5-phospho-beta-D-ribosyl)-5-[(5-phospho-beta-D-ribosylamino)methylideneamino]imidazole-4-carboxamide. It participates in amino-acid biosynthesis; L-histidine biosynthesis; L-histidine from 5-phospho-alpha-D-ribose 1-diphosphate: step 2/9. It functions in the pathway amino-acid biosynthesis; L-histidine biosynthesis; L-histidine from 5-phospho-alpha-D-ribose 1-diphosphate: step 3/9. The polypeptide is Histidine biosynthesis bifunctional protein HisIE (hisI) (Nostoc sp. (strain PCC 7120 / SAG 25.82 / UTEX 2576)).